The primary structure comprises 696 residues: Glycine--tRNA ligase beta subunit (696 aa).

The protein belongs to the class-II aminoacyl-tRNA synthetase family. In terms of assembly, tetramer of two alpha and two beta subunits.

It is found in the cytoplasm. The catalysed reaction is tRNA(Gly) + glycine + ATP = glycyl-tRNA(Gly) + AMP + diphosphate. The chain is Glycine--tRNA ligase beta subunit from Aromatoleum aromaticum (strain DSM 19018 / LMG 30748 / EbN1) (Azoarcus sp. (strain EbN1)).